A 53-amino-acid chain; its full sequence is UPF0391 membrane protein Bxeno_A2958 (53 aa).

Helical transmembrane passes span 5-25 (AIVFFVIAIIAAVFGFTGIAA) and 30-50 (IAKILFYIFLVVFVVTLLLGV).

This sequence belongs to the UPF0391 family.

The protein resides in the cell membrane. This is UPF0391 membrane protein Bxeno_A2958 from Paraburkholderia xenovorans (strain LB400).